A 221-amino-acid polypeptide reads, in one-letter code: Woronin body major protein (221 aa).

Positions 219–221 match the Microbody targeting signal motif; the sequence is SRL.

The protein belongs to the eIF-5A family. Hex1 subfamily. Forms oligomers. Self-assembles into hexagonal rods.

Its subcellular location is the cell septum. Its function is as follows. Major component of Woronin bodies, fungal-specific organelles that occlude septal pores in order to separate intact from damaged compartments. Hex1 binds directly or indirectly to the Woronin body tether that in turn is anchored at the rim of the septal pore. The polypeptide is Woronin body major protein (Emericella nidulans (strain FGSC A4 / ATCC 38163 / CBS 112.46 / NRRL 194 / M139) (Aspergillus nidulans)).